The following is a 374-amino-acid chain: Alcohol dehydrogenase class-3 (374 aa).

At Ser2 the chain carries N-acetylserine. Cys45, His67, Cys97, Cys100, Cys103, Cys111, and Cys174 together coordinate Zn(2+). Position 233 is an N6-succinyllysine (Lys233). Ser247 is subject to Phosphoserine. Residue Lys315 is modified to N6-succinyllysine. A phosphoserine mark is found at Ser324 and Ser351.

This sequence belongs to the zinc-containing alcohol dehydrogenase family. Class-III subfamily. Homodimer. Requires Zn(2+) as cofactor.

Its subcellular location is the cytoplasm. It catalyses the reaction a primary alcohol + NAD(+) = an aldehyde + NADH + H(+). The catalysed reaction is a secondary alcohol + NAD(+) = a ketone + NADH + H(+). The enzyme catalyses S-(hydroxymethyl)glutathione + NADP(+) = S-formylglutathione + NADPH + H(+). It carries out the reaction S-(hydroxymethyl)glutathione + NAD(+) = S-formylglutathione + NADH + H(+). It catalyses the reaction 20-oxo-(5Z,8Z,11Z,14Z)-eicosatetraenoate + NAD(+) + H2O = (5Z,8Z,11Z,14Z)-eicosatetraenedioate + NADH + 2 H(+). The catalysed reaction is 20-hydroxy-(5Z,8Z,11Z,14Z)-eicosatetraenoate + NAD(+) = 20-oxo-(5Z,8Z,11Z,14Z)-eicosatetraenoate + NADH + H(+). The enzyme catalyses S-nitrosoglutathione + NADH + H(+) = S-(hydroxysulfenamide)glutathione + NAD(+). Functionally, catalyzes the oxidation of long-chain primary alcohols and the oxidation of S-(hydroxymethyl) glutathione. Also oxidizes long chain omega-hydroxy fatty acids, such as 20-HETE, producing both the intermediate aldehyde, 20-oxoarachidonate and the end product, a dicarboxylic acid, (5Z,8Z,11Z,14Z)-eicosatetraenedioate. Class-III ADH is remarkably ineffective in oxidizing ethanol. Required for clearance of cellular formaldehyde, a cytotoxic and carcinogenic metabolite that induces DNA damage. Also acts as a S-nitroso-glutathione reductase by catalyzing the NADH-dependent reduction of S-nitrosoglutathione, thereby regulating protein S-nitrosylation. In Equus caballus (Horse), this protein is Alcohol dehydrogenase class-3.